A 311-amino-acid chain; its full sequence is D-alanine--D-alanine ligase (311 aa).

One can recognise an ATP-grasp domain in the interval 105–306 (KQLYIHAGLP…FSALLDRLIE (202 aa)). Residue 133–188 (ADRLGLPVVVKPEHEGSSIGLSIVRNRDQLAAAVETGWQYDRRCLIEKYVHGIEIT) participates in ATP binding. The Mg(2+) site is built by aspartate 261, glutamate 273, and asparagine 275.

The protein belongs to the D-alanine--D-alanine ligase family. The cofactor is Mg(2+). Requires Mn(2+) as cofactor.

Its subcellular location is the cytoplasm. It carries out the reaction 2 D-alanine + ATP = D-alanyl-D-alanine + ADP + phosphate + H(+). The protein operates within cell wall biogenesis; peptidoglycan biosynthesis. Its function is as follows. Cell wall formation. The chain is D-alanine--D-alanine ligase from Syntrophobacter fumaroxidans (strain DSM 10017 / MPOB).